The primary structure comprises 2664 residues: Non-reducing polyketide synthase sorB (2664 aa).

The tract at residues 21–45 is disordered; that stretch reads KSAPQSGNTADDIPNAASQPDTTST. The segment covering 36 to 45 has biased composition (polar residues); it reads AASQPDTTST. Residues 112–281 form an N-terminal acylcarrier protein transacylase domain (SAT) region; sequence ADHARRLAEW…TTPSRIASDL (170 aa). Cys-184 acts as the Nucleophile; for transacylase activity in catalysis. Catalysis depends on His-302, which acts as the Proton donor/acceptor; for transacylase activity. Residues 428-849 form the Ketosynthase family 3 (KS3) domain; that stretch reads DNDIAVIGMS…GSNASMVIKQ (422 aa). Residues Cys-596, His-731, and His-772 each act as for beta-ketoacyl synthase activity in the active site. Residues 961-1276 are malonyl-CoA:ACP transacylase (MAT) domain; the sequence is CFGGQVSKSV…TQGTRQLADV (316 aa). The tract at residues 1345–1477 is N-terminal hotdog fold; that stretch reads PGLYTFMGYG…GQLEFHRADD (133 aa). One can recognise a PKS/mFAS DH domain in the interval 1345-1663; the sequence is PGLYTFMGYG…FSARSMSELF (319 aa). The tract at residues 1376-1548 is product template (PT) domain; it reads VSGYTLGKTV…PSESAGRAVK (173 aa). The interval 1507-1663 is C-terminal hotdog fold; that stretch reads DEVIQGQSIY…FSARSMSELF (157 aa). The Carrier domain occupies 1711 to 1785; sequence TELWAKLLPV…GILAFLQSTL (75 aa). Position 1745 is an O-(pantetheine 4'-phosphoryl)serine (Ser-1745). The interval 1789–1820 is disordered; the sequence is GEDDASQSSDAASSSRNTPPSSNDGILATPSP. Residues 1794–1803 are compositionally biased toward low complexity; it reads SQSSDAASSS. The tract at residues 2015–2197 is methyltransferase domain; that stretch reads FQLMADFLSR…DAGYKHVEWT (183 aa). The tract at residues 2281–2526 is NADPH-binding (R) domain; that stretch reads VTGTTGSLGS…TLRSFPAVEG (246 aa).

Pantetheine 4'-phosphate is required as a cofactor.

Its pathway is secondary metabolite biosynthesis. Its function is as follows. Non-reducing polyketide synthase; part of the gene cluster that mediates the biosynthesis of sorbicillinoids, a diverse group of yellow secondary metabolites that restrict growth of competing pathogenic fungi but not of bacteria. Sorbicillinoids biosynthesis requires the action of two PKSs. SorA iteratively combines three acetyl units and the growing chain is modified by the ketoacyl reductase subunit, and optional by the enoyl reductase subunit in the second cycle. The polyketide is then handed over to the PKS SorB, which adds three more acetyl units, and two methyl groups. SorB releases an aldehyde, which undergoes spontaneous cyclization resulting in the formation of sorbicillin or 2',3'-dihydrosorbicillin. The monooxygenase sorC oxidizes sorbicillin and 2',3'-dihydrosorbicillin to 2',3'-dihydrosorbicillinol and sorbicillinol, respectively. The oxidoreductase sorD further converts sorbicillinol into oxosorbicillinol. Sorbicillinol is the building block for the other sorbicillinoids such as disorbicillinol, bisvertinolon, and dihydrobisvertinolone. The chain is Non-reducing polyketide synthase sorB from Penicillium rubens (strain ATCC 28089 / DSM 1075 / NRRL 1951 / Wisconsin 54-1255) (Penicillium chrysogenum).